A 98-amino-acid polypeptide reads, in one-letter code: Sm-like protein LSM8 (98 aa).

Positions 2–78 (AATTGLETLV…IGVIGELDEE (77 aa)) constitute a Sm domain.

It belongs to the snRNP Sm proteins family. As to quaternary structure, component of the heptameric LSM2-LSM8 complex that forms a seven-membered ring structure with a donut shape. The LSM subunits are arranged in the order LSM8, LSM2, LSM3, LSM6, LSM5, LSM7 and LSM4. LSM8 subunit interacts only with its two neighboring subunits, LSM2 and LSM4. Interacts with the prefoldin co-chaperone subunits PFD1, PFD2, PFD3, PFD4, PFD5 and PFD6. As to expression, expressed in roots, leaves, stems, flowers and siliques.

Its subcellular location is the nucleus. Its function is as follows. Component of the nuclear LSM2-LSM8 complex which is involved splicing nuclear mRNAs. LSM2-LSM8 binds directly to the U6 small nuclear RNAs (snRNAs). LSM8 is essential for the formation of the nuclear LSM2-LSM8 complex involved in the accurate splicing of selected development-related mRNAs through the stabilization of the spliceosomal U6 snRNA. Plays a critical role in the regulation of development-related gene expression. This is Sm-like protein LSM8 from Arabidopsis thaliana (Mouse-ear cress).